The primary structure comprises 400 residues: Protein screw (400 aa).

The N-terminal stretch at 1-16 is a signal peptide; sequence MLNVFFLTSLFYAASA. A propeptide spanning residues 17-277 is cleaved from the precursor; it reads TTYVTTNNHI…RFKRDLEKRR (261 aa). N-linked (GlcNAc...) asparagine glycosylation is found at asparagine 165, asparagine 189, asparagine 201, asparagine 304, and asparagine 342. Disulfide bonds link cysteine 300–cysteine 365, cysteine 329–cysteine 397, and cysteine 333–cysteine 399.

This sequence belongs to the TGF-beta family. As to quaternary structure, heterodimers of scw/dpp are the active subunit, dpp/dpp homodimers elicit a basal response and scw/scw homodimers alone are ineffective in specifying a dorsal pattern. Ubiquitously expressed during early stages of embryogenesis, but the effect on development appears graded and is restricted to the dorsal side of the embryo.

The protein localises to the secreted. Functionally, part of the signal that specifies dorsal cell fates in the embryo. Acts together with dpp. The chain is Protein screw (scw) from Drosophila melanogaster (Fruit fly).